Consider the following 346-residue polypeptide: Probable aldo-keto reductase 2 (346 aa).

Tyr63 (proton donor) is an active-site residue. His131 contributes to the substrate binding site. Residue 210 to 220 (SPLGRGFLAAG) participates in NADP(+) binding.

It belongs to the aldo/keto reductase family. Aldo/keto reductase 13 subfamily.

The sequence is that of Probable aldo-keto reductase 2 (AGD2) from Arabidopsis thaliana (Mouse-ear cress).